Reading from the N-terminus, the 224-residue chain is ATP-dependent Clp protease proteolytic subunit 1 (224 aa).

The active-site Nucleophile is Ser120. His145 is a catalytic residue.

It belongs to the peptidase S14 family. In terms of assembly, fourteen ClpP subunits assemble into 2 heptameric rings which stack back to back to give a disk-like structure with a central cavity, resembling the structure of eukaryotic proteasomes.

Its subcellular location is the cytoplasm. It carries out the reaction Hydrolysis of proteins to small peptides in the presence of ATP and magnesium. alpha-casein is the usual test substrate. In the absence of ATP, only oligopeptides shorter than five residues are hydrolyzed (such as succinyl-Leu-Tyr-|-NHMec, and Leu-Tyr-Leu-|-Tyr-Trp, in which cleavage of the -Tyr-|-Leu- and -Tyr-|-Trp bonds also occurs).. Cleaves peptides in various proteins in a process that requires ATP hydrolysis. Has a chymotrypsin-like activity. Plays a major role in the degradation of misfolded proteins. The protein is ATP-dependent Clp protease proteolytic subunit 1 of Prochlorococcus marinus (strain MIT 9313).